A 170-amino-acid chain; its full sequence is RxLR effector protein CRE16 (170 aa).

Residues M1–A23 form the signal peptide. Positions R47–R68 match the RxLR-dEER motif.

This sequence belongs to the RxLR effector family.

It localises to the secreted. The protein localises to the host cytoplasm. Its subcellular location is the host nucleus. Effector that is involved in host plant infection. Contributes to virulence during the early infection stage, by inhibiting plant defense responses induced by both PAMP-triggered immunity (PTI) and effector-triggered immunity (ETI). This Phytophthora infestans (strain T30-4) (Potato late blight agent) protein is RxLR effector protein CRE16.